Reading from the N-terminus, the 589-residue chain is Aspartate--tRNA ligase (589 aa).

Glu-176 contributes to the L-aspartate binding site. Positions 200–203 (QLFK) are aspartate. Position 222 (Arg-222) interacts with L-aspartate. Residues 222 to 224 (RDE) and Gln-231 contribute to the ATP site. His-449 is an L-aspartate binding site. Glu-483 contributes to the ATP binding site. Arg-490 provides a ligand contact to L-aspartate. Residue 535–538 (GLDR) coordinates ATP.

This sequence belongs to the class-II aminoacyl-tRNA synthetase family. Type 1 subfamily. Homodimer.

The protein localises to the cytoplasm. It carries out the reaction tRNA(Asp) + L-aspartate + ATP = L-aspartyl-tRNA(Asp) + AMP + diphosphate. In terms of biological role, catalyzes the attachment of L-aspartate to tRNA(Asp) in a two-step reaction: L-aspartate is first activated by ATP to form Asp-AMP and then transferred to the acceptor end of tRNA(Asp). The protein is Aspartate--tRNA ligase of Enterococcus faecalis (strain ATCC 700802 / V583).